The sequence spans 225 residues: GrpE protein homolog 2, mitochondrial (225 aa).

The transit peptide at 1–32 directs the protein to the mitochondrion; the sequence is MAVRSLWACRLRVQRLLAWSAAWESKGWPLPF. An N6-acetyllysine modification is found at Lys142.

Belongs to the GrpE family. In terms of assembly, probable component of the PAM complex at least composed of a mitochondrial HSP70 protein, GRPEL1 or GRPEL2, TIMM44, TIMM16/PAM16 and TIMM14/DNAJC19.

The protein localises to the mitochondrion matrix. Functionally, essential component of the PAM complex, a complex required for the translocation of transit peptide-containing proteins from the inner membrane into the mitochondrial matrix in an ATP-dependent manner. Seems to control the nucleotide-dependent binding of mitochondrial HSP70 to substrate proteins. Stimulates ATPase activity of mt-HSP70. May also serve to modulate the interconversion of oligomeric (inactive) and monomeric (active) forms of mt-HSP70. In Pongo abelii (Sumatran orangutan), this protein is GrpE protein homolog 2, mitochondrial (GRPEL2).